Consider the following 128-residue polypeptide: Small ribosomal subunit protein uS11 (128 aa).

The protein belongs to the universal ribosomal protein uS11 family. Part of the 30S ribosomal subunit. Interacts with proteins S7 and S18. Binds to IF-3.

Located on the platform of the 30S subunit, it bridges several disparate RNA helices of the 16S rRNA. Forms part of the Shine-Dalgarno cleft in the 70S ribosome. This chain is Small ribosomal subunit protein uS11, found in Synechococcus sp. (strain JA-2-3B'a(2-13)) (Cyanobacteria bacterium Yellowstone B-Prime).